The following is a 136-amino-acid chain: Large ribosomal subunit protein uL16 (136 aa).

The protein belongs to the universal ribosomal protein uL16 family. Part of the 50S ribosomal subunit.

Functionally, binds 23S rRNA and is also seen to make contacts with the A and possibly P site tRNAs. The protein is Large ribosomal subunit protein uL16 of Haemophilus ducreyi (strain 35000HP / ATCC 700724).